The primary structure comprises 825 residues: Leucine-rich repeat and guanylate kinase domain-containing protein (825 aa).

The disordered stretch occupies residues 73-96; that stretch reads DSDGDEDQGEGEAGSEESSESEML. 9 LRR repeats span residues 129-149, 150-171, 172-193, 194-215, 216-237, 238-259, 260-280, 281-302, and 303-324; these read YLNLTLSGCNLIDVSILCGYV, HLQKLDLSANKIEDLSCVSCMP, YLLELNASQNNLTTFFNFKPPK, NLKKADFSHNQISEICDLSAYH, ALTKLILDGNEIEEISGLEMCN, NLIHLSLANNKITTINGLNKLP, IKILCLSNNQIEMITGLEDLK, ALQNLDLSHNQISSLQGLENHD, and LLEVINLEDNKIAELREIEYIK. One can recognise an LRRCT domain in the interval 337-375; the sequence is NPIQEKSEYWFFVIFMLLRLTELDQKKIKVEEKVSAVNK. A Guanylate kinase-like domain is found at 414–597; the sequence is YPMLILAGPE…AYQKLSQLIR (184 aa). 421–428 contributes to the ATP binding site; that stretch reads GPEACGKR. Residues 760-825 are disordered; sequence PEGSISSHLG…TLPPIPQGRR (66 aa). Polar residues predominate over residues 763–774; that stretch reads SISSHLGSGASD. A compositionally biased stretch (pro residues) spans 816–825; the sequence is TLPPIPQGRR.

As to quaternary structure, interacts (via guanylate kinase-like domain) with RIMBP3 (via coiled-coil region). Interacts (via guanylate kinase-like domain) with HOOK2. Interacts (via LRRCT domain) with KLC3. Interacts with HOOK1 and HOOK3.

Its subcellular location is the cytoplasmic vesicle. It is found in the secretory vesicle. It localises to the acrosome. The protein resides in the cytoplasm. The protein localises to the cytoskeleton. Its subcellular location is the cilium basal body. Functionally, involved in multiple aspects of sperm assembly including acrosome attachment, shaping of the sperm head and in the early aspects of axoneme development. Not essential for primary cilium biogenesis. The chain is Leucine-rich repeat and guanylate kinase domain-containing protein (LRGUK) from Homo sapiens (Human).